Here is a 587-residue protein sequence, read N- to C-terminus: General negative regulator of transcription subunit 4 (587 aa).

The RING-type zinc finger occupies 33 to 78 (CPLCIEPMDITDKNFFPCPCGYQICQFCYNNIRQNPELNGRCPACR). The stretch at 94–128 (EELKMERAKLARKEKERKHREKERKENEYTNRKHL) forms a coiled coil. Residues 137 to 228 (NLVYVVGINP…YMDGRLIKAA (92 aa)) form the RRM domain. The segment at 229–256 (YGTTKYCSSYLRGLPCPNPNCMFLHEPG) adopts a C3H1-type zinc-finger fold. A Glycyl lysine isopeptide (Lys-Gly) (interchain with G-Cter in ubiquitin) cross-link involves residue Lys270. Thr310 is modified (phosphothreonine). Ser312 carries the phosphoserine modification. A Phosphothreonine modification is found at Thr326. Residue Ser360 is modified to Phosphoserine. Residues 370–412 (TLNDSLGHHTTPTTENTITSTTTTTNTNATSHSHGSKKKQSLA) are disordered. Low complexity predominate over residues 377–402 (HHTTPTTENTITSTTTTTNTNATSHS).

In terms of assembly, forms a NOT protein complex that comprises NOT1, NOT2, NOT3, NOT4 and NOT5. Subunit of the 1.0 MDa CCR4-NOT core complex that contains CCR4, CAF1, NOT1, NOT2, NOT3, NOT4, NOT5, CAF40 and CAF130. In the complex interacts with NOT1. The core complex probably is part of a less characterized 1.9 MDa CCR4-NOT complex.

The protein localises to the cytoplasm. It is found in the nucleus. The enzyme catalyses S-ubiquitinyl-[E2 ubiquitin-conjugating enzyme]-L-cysteine + [acceptor protein]-L-lysine = [E2 ubiquitin-conjugating enzyme]-L-cysteine + N(6)-ubiquitinyl-[acceptor protein]-L-lysine.. The protein operates within protein modification; protein ubiquitination. Its function is as follows. E3 ubiquitin-protein ligase component of the CCR4-NOT core complex, which in the nucleus seems to be a general transcription factor, and in the cytoplasm the major mRNA deadenylase involved in mRNA turnover. The NOT protein subcomplex negatively regulates the basal and activated transcription of many genes. Preferentially affects TC-type TATA element-dependent transcription. Could directly or indirectly inhibit component(s) of the general transcription machinery. In the cytoplasm, catalyzes monoubiquitination of RPS7/es7 in response to stalled ribosomes, initiating a HEL2-dependent response that activates the No-Go Decay (NGD) pathway. This Saccharomyces cerevisiae (strain ATCC 204508 / S288c) (Baker's yeast) protein is General negative regulator of transcription subunit 4 (MOT2).